A 301-amino-acid chain; its full sequence is Ornithine carbamoyltransferase (301 aa).

Residues R107 and 134–137 each bind carbamoyl phosphate; that span reads HPLQ. L-ornithine is bound by residues N165, D220, and 224–225; that span reads SM. Carbamoyl phosphate-binding positions include 260–261 and R288; that span reads CL.

It belongs to the aspartate/ornithine carbamoyltransferase superfamily. OTCase family. Homotrimer.

The protein resides in the cytoplasm. The catalysed reaction is carbamoyl phosphate + L-ornithine = L-citrulline + phosphate + H(+). It participates in amino-acid biosynthesis; L-arginine biosynthesis; L-arginine from L-ornithine and carbamoyl phosphate: step 1/3. Its activity is regulated as follows. Inhibited by delta-N-phosphonoacetyl-L-ornithine. In terms of biological role, reversibly catalyzes the transfer of the carbamoyl group from carbamoyl phosphate (CP) to the N(epsilon) atom of ornithine (ORN) to produce L-citrulline, which is a substrate for argininosuccinate synthetase, the enzyme involved in the final step in arginine biosynthesis. The polypeptide is Ornithine carbamoyltransferase (Thermus thermophilus (strain ATCC BAA-163 / DSM 7039 / HB27)).